A 699-amino-acid chain; its full sequence is D-(-)-3-hydroxybutyrate oligomer hydrolase (699 aa).

An N-terminal signal peptide occupies residues 1–33 (MTAIRGGSRRAPGLALALLGGVLLGACHGDENA). Catalysis depends on Ser-311, which acts as the Charge relay system.

It belongs to the D-(-)-3-hydroxybutyrate oligomer hydrolase family.

The protein localises to the secreted. It catalyses the reaction (3R)-hydroxybutanoate dimer + H2O = 2 (R)-3-hydroxybutanoate + H(+). It participates in lipid metabolism; butanoate metabolism. In terms of biological role, participates in the degradation of poly-3-hydroxybutyrate (PHB). It works downstream of poly(3-hydroxybutyrate) depolymerase, hydrolyzing D(-)-3-hydroxybutyrate oligomers of various length (3HB-oligomers) into 3HB-monomers. The protein is D-(-)-3-hydroxybutyrate oligomer hydrolase of Burkholderia mallei (strain ATCC 23344).